A 219-amino-acid chain; its full sequence is MAAGGQPQGATPGQPDQNFDYMFKLLIIGNSSVGKTSFLFRYCDDSFTSAFVSTVGIDFKVKTVFRGDKRVKLQIWDTAGQERYRTITTAYYRGAMGFILMYDITNEESFNSVQDWCTQIKTYSWENAQVVLVGNKCDMDSERVVSMDRGRQLADQLGLEFFETSAKENINVKAVFEKLVEIICDKMAESLDKDPQQQPKGQKLEANPTQKPAQQQCNC.

GTP contacts are provided by residues 29–37 (GNSSVGKTS), 48–54 (TSAFVST), 77–81 (DTAGQ), 135–138 (NKCD), and 165–167 (SAK). An Effector region motif is present at residues 51 to 59 (FVSTVGIDF). The segment at 191–219 (LDKDPQQQPKGQKLEANPTQKPAQQQCNC) is disordered. Over residues 207-219 (NPTQKPAQQQCNC) the composition is skewed to polar residues. 2 S-geranylgeranyl cysteine lipidation sites follow: Cys217 and Cys219. Residue Cys219 is modified to Cysteine methyl ester.

This sequence belongs to the small GTPase superfamily. Rab family.

The protein resides in the cell membrane. Involved in exocytosis by regulating a late step in synaptic vesicle fusion. Could play a role in neurotransmitter release by regulating membrane flow in the nerve terminal. Plays a role in the recruitment of endophilin unc-57 to synaptic vesicles. Probably by controlling dense-core vesicle trafficking, plays a role in the AVG neuron-mediated formation of the right axon tract of the ventral nerve cord. The sequence is that of Ras-related protein Rab-3 (rab-3) from Caenorhabditis elegans.